The sequence spans 1450 residues: Helicase SWR1 (1450 aa).

Residues 344-417 enclose the HSA domain; it reads IQYMYKEQNL…EKQRKAIARN (74 aa). The segment at 469–618 is disordered; that stretch reads KQHPNEDDIE…TNDPLAVQDV (150 aa). Residues 480–497 are compositionally biased toward low complexity; sequence STSDDFSSTGDSDNLSSS. The span at 498–510 shows a compositional bias: acidic residues; the sequence is SDEESDDEINDLS. Composition is skewed to low complexity over residues 523-540 and 549-560; these read SSTS…SKNP and TNDFENESNSSD. Residues 578-588 are compositionally biased toward acidic residues; it reads ENLTDDSEDSN. A compositionally biased stretch (basic and acidic residues) spans 589–602; it reads DGEHDTTSDNEKSD. Residues 640–805 enclose the Helicase ATP-binding domain; sequence ASLYNNNTNG…WSLLYFLMPQ (166 aa). 653 to 700 lines the ATP pocket; sequence DEMGLGKTIQTISLLSYLACEKHNWGPHLIVVPTSVLLNWEMEFKRFA. Residues 756 to 759 carry the DEAH box motif; it reads DEAH. The 154-residue stretch at 1179–1332 folds into the Helicase C-terminal domain; the sequence is KLQKLAILLQ…DVIIQKGEFT (154 aa). Residues 1400–1424 form a disordered region; the sequence is VDDEDFDESSTNKTGGNILNGDDID.

This sequence belongs to the SNF2/RAD54 helicase family. SWR1 subfamily. Component of the SWR1 chromatin-remodeling complex.

It localises to the nucleus. The enzyme catalyses ATP + H2O = ADP + phosphate + H(+). Its function is as follows. Catalytic component of the SWR1 complex which mediates the ATP-dependent exchange of histone H2A for the H2A variant HZT1 leading to transcriptional regulation of selected genes by chromatin remodeling. This is Helicase SWR1 (SWR1) from Candida glabrata (strain ATCC 2001 / BCRC 20586 / JCM 3761 / NBRC 0622 / NRRL Y-65 / CBS 138) (Yeast).